Consider the following 517-residue polypeptide: MNVFFMFSLLFLAALESCADDRRNPLGECFREADYEEFVDIATNGLKQTSNPKRVVVVGAGMAGLSAAYVLAGAGHNVMLLEASERVGGRVNTYRNEQEGWYVNLGPMRLPERHRIVREYIKKFGLQLNQFFQEDEDAWYFIKNIRKKVREVKENPSIFPYPVKPSEKGKSAPQLYRDSLQKIIEEYGRSNCSYILNKYDTYSTKDYLIKEGNLSPGAVDMIGDLLNEGSSYYLSFIESLKSDDIFSYENRFDEIVGGFDLLPKAMYKAIEEKVHLNARVIQIQQNAEGVRVTYQTPAKNLSYVTADYVIVCSTSRAARRIYFEPPLPPEKAHALQSIHYRSATKIFLTCTKKFWEDDGIHGGKSITDRPSRLIHYPNHNFPNGIGVLVIYTIADDADFFLALDNKTIADIVIHDLSLIHQLPKEKIRDLCYVSMIKKWSLDKYSMGSITTFAPYQFQEYFETVAAPVGRIYFAGEYTARAHGWIDSTIKSGLKAARDVNRASQKPSRIQLSNDNEL.

Positions 1–18 are cleaved as a signal peptide; sequence MNVFFMFSLLFLAALESC. Cys-29 and Cys-192 form a disulfide bridge. FAD is bound by residues 62 to 63, 82 to 83, Arg-90, and 106 to 109; these read MA, EA, and GPMR. Residue Arg-109 participates in substrate binding. N-linked (GlcNAc...) asparagine glycosylation occurs at Asn-191. Val-280 serves as a coordination point for FAD. A disulfide bridge connects residues Cys-350 and Cys-431. Tyr-391 is a binding site for substrate. Residues Glu-476 and 483-488 contribute to the FAD site; that span reads GWIDST. Residue 483 to 484 participates in substrate binding; sequence GW.

This sequence belongs to the flavin monoamine oxidase family. FIG1 subfamily. As to quaternary structure, homodimer; non-covalently linked. FAD serves as cofactor. In terms of processing, N-glycosylated. As to expression, expressed by the venom gland.

The protein resides in the secreted. The enzyme catalyses an L-alpha-amino acid + O2 + H2O = a 2-oxocarboxylate + H2O2 + NH4(+). Its function is as follows. Catalyzes an oxidative deamination of predominantly hydrophobic and aromatic L-amino acids, thus producing hydrogen peroxide that may contribute to the diverse toxic effects of this enzyme. Exhibits diverse biological activities, such as hemorrhage, hemolysis, edema, apoptosis of vascular endothelial cells or tumor cell lines, antibacterial and antiparasitic activities, as well as regulation of platelet aggregation. Its effect on platelets is controversial, since it either induces aggregation or inhibits agonist-induced aggregation. These different effects are probably due to different experimental conditions. This is L-amino-acid oxidase from Demansia vestigiata (Lesser black whip snake).